The chain runs to 329 residues: DNA-directed RNA polymerase subunit alpha (329 aa).

The segment at 1–235 (MQGSVTEFLK…EQLDAFVDLR (235 aa)) is alpha N-terminal domain (alpha-NTD). The alpha C-terminal domain (alpha-CTD) stretch occupies residues 249-329 (FDPILLRPVD…NWPPASIAED (81 aa)).

The protein belongs to the RNA polymerase alpha chain family. In terms of assembly, homodimer. The RNAP catalytic core consists of 2 alpha, 1 beta, 1 beta' and 1 omega subunit. When a sigma factor is associated with the core the holoenzyme is formed, which can initiate transcription.

It catalyses the reaction RNA(n) + a ribonucleoside 5'-triphosphate = RNA(n+1) + diphosphate. Functionally, DNA-dependent RNA polymerase catalyzes the transcription of DNA into RNA using the four ribonucleoside triphosphates as substrates. This is DNA-directed RNA polymerase subunit alpha from Aliivibrio fischeri (strain ATCC 700601 / ES114) (Vibrio fischeri).